We begin with the raw amino-acid sequence, 79 residues long: Short neurotoxin 7 (79 aa).

An N-terminal signal peptide occupies residues 1-21 (MKTLLLTLVMVTIMCLDLGYT). 4 disulfides stabilise this stretch: C24-C41, C34-C59, C63-C71, and C72-C77.

The protein belongs to the three-finger toxin family. Short-chain subfamily. Type III alpha-neurotoxin sub-subfamily. Expressed by the venom gland.

Its subcellular location is the secreted. Functionally, binds with high affinity to muscle nicotinic acetylcholine receptor (nAChR) and hinders acetylcholine binding to the receptor, thereby impairing neuromuscular transmission. Competes with the binding of alpha-bungarotoxin on muscle AChR (from Torpedo) (IC(50)=0.30 uM). In vivo, causes muscle paralysis, spasms and increased respiration. The chain is Short neurotoxin 7 from Pseudonaja textilis (Eastern brown snake).